The chain runs to 281 residues: Aliphatic sulfonates import ATP-binding protein SsuB (281 aa).

The ABC transporter domain occupies 40–263; the sequence is LDIRGLRKSF…QRGSAELAAL (224 aa). Residue 72–79 coordinates ATP; the sequence is GRSGCGKS.

It belongs to the ABC transporter superfamily. Aliphatic sulfonates importer (TC 3.A.1.17.2) family. As to quaternary structure, the complex is composed of two ATP-binding proteins (SsuB), two transmembrane proteins (SsuC) and a solute-binding protein (SsuA).

Its subcellular location is the cell inner membrane. It catalyses the reaction ATP + H2O + aliphatic sulfonate-[sulfonate-binding protein]Side 1 = ADP + phosphate + aliphatic sulfonateSide 2 + [sulfonate-binding protein]Side 1.. Functionally, part of the ABC transporter complex SsuABC involved in aliphatic sulfonates import. Responsible for energy coupling to the transport system. The protein is Aliphatic sulfonates import ATP-binding protein SsuB of Rhodopseudomonas palustris (strain ATCC BAA-98 / CGA009).